We begin with the raw amino-acid sequence, 348 residues long: MTDLDLDWQLEELENGRLIPESNVVELCQRVRDILIEESNIQWISSPVTICGDIHGQLHDLLELFRIGGSCPGTKYLFLGDFVDRGFYSVETFLLLLTLKCKYPKEMTLIRGNHESRQITQVYGFYDECVRKYGSANVWRYCCEIFDYLSLGALVDGKVFCVHGGLSPSISSIDQIRLLDRKQEVPHEGAMCDLLWSDPEDISGWGLSPRGAGFLFGADVSEVFNRANDLSFIARAHQLVMEGYKIHFSDKDKQYPKFTNEEDSELDSDSASPVDDSPAPGDIITIPEKDKGSVVTVWSAPNYCYRCGNVASILQLDENQTQSFKIFGTASQERSGIPTKRPIADYFL.

The Mn(2+) site is built by aspartate 53, histidine 55, aspartate 81, and asparagine 113. Residue histidine 114 is the Proton donor of the active site. Mn(2+) is bound by residues histidine 163 and histidine 237. The disordered stretch occupies residues 259-282; sequence TNEEDSELDSDSASPVDDSPAPGD. Low complexity predominate over residues 269 to 280; it reads DSASPVDDSPAP. Residue serine 272 is modified to Phosphoserine. Leucine 348 is modified (leucine methyl ester).

Belongs to the PPP phosphatase family. PP-1 subfamily. Requires Mn(2+) as cofactor.

Its subcellular location is the cytoplasm. It localises to the nucleus. The catalysed reaction is O-phospho-L-seryl-[protein] + H2O = L-seryl-[protein] + phosphate. It catalyses the reaction O-phospho-L-threonyl-[protein] + H2O = L-threonyl-[protein] + phosphate. This is Putative serine/threonine-protein phosphatase C26H8.05c from Schizosaccharomyces pombe (strain 972 / ATCC 24843) (Fission yeast).